The sequence spans 2389 residues: Highly reducing polyketide synthase Dhc3 (2389 aa).

One can recognise a Ketosynthase family 3 (KS3) domain in the interval 9-433; the sequence is DVPIAVVGLA…GTNGHAVLES (425 aa). Active-site for beta-ketoacyl synthase activity residues include cysteine 181, histidine 316, and histidine 356. A malonyl-CoA:ACP transacylase (MAT) domain region spans residues 551–861; it reads FVFTGQGAQW…LSGPVEQILN (311 aa). Serine 641 acts as the For malonyltransferase activity in catalysis. The segment at 944–1079 is N-terminal hotdog fold; the sequence is RSLIGAQVPM…GLITIDYADT (136 aa). A PKS/mFAS DH domain is found at 944–1263; the sequence is RSLIGAQVPM…VSELENDTEA (320 aa). The segment at 946 to 1262 is dehydratase (DH) domain; it reads LIGAQVPMMD…RVSELENDTE (317 aa). Histidine 976 functions as the Proton acceptor; for dehydratase activity in the catalytic mechanism. Residues 1107–1263 are C-terminal hotdog fold; sequence PDICSKEDFY…VSELENDTEA (157 aa). Residue aspartate 1173 is the Proton donor; for dehydratase activity of the active site. An enoylreductase (ER) domain region spans residues 1673–1987; the sequence is GLLDTLAFIE…QGKHRGKLVL (315 aa). The segment at 2011-2191 is catalytic ketoreductase (KRc) domain; sequence ATYLFVGGLG…VAVDLGIMRD (181 aa). Residues 2302 to 2379 form the Carrier domain; it reads EAVSIITDAL…EFAEKIAEKS (78 aa). The residue at position 2339 (serine 2339) is an O-(pantetheine 4'-phosphoryl)serine.

The protein operates within mycotoxin biosynthesis. Functionally, highly reducing polyketide synthase; part of the gene cluster that mediates the biosynthesis of 10,11-dehydrocurvularin, a prevalent fungal phytotoxin with heat shock response and immune-modulatory activities. The highly reducing polyketide synthase Dhc3 is responsible for biosynthesis up to the tetraketide stage. The non-reducing polyketide synthase Dhc5 then conducts four additional chain extension cycles, producing the unreduced part of the nascent octaketide from C-1 to C-8 in 10,11-dehydrocurvularin. The protein is Highly reducing polyketide synthase Dhc3 (Dhc3) of Alternaria cinerariae.